Consider the following 405-residue polypeptide: Deoxyguanosinetriphosphate triphosphohydrolase-like protein (405 aa).

An HD domain is found at 75–219 (RLTHTIEVAQ…AAIADDIAYN (145 aa)).

The protein belongs to the dGTPase family. Type 2 subfamily.

The polypeptide is Deoxyguanosinetriphosphate triphosphohydrolase-like protein (Rhizobium leguminosarum bv. trifolii (strain WSM2304)).